The sequence spans 347 residues: N-acetyl-gamma-glutamyl-phosphate reductase (347 aa).

Residue Cys-151 is part of the active site.

The protein belongs to the NAGSA dehydrogenase family. Type 1 subfamily.

Its subcellular location is the cytoplasm. It catalyses the reaction N-acetyl-L-glutamate 5-semialdehyde + phosphate + NADP(+) = N-acetyl-L-glutamyl 5-phosphate + NADPH + H(+). It functions in the pathway amino-acid biosynthesis; L-arginine biosynthesis; N(2)-acetyl-L-ornithine from L-glutamate: step 3/4. In terms of biological role, catalyzes the NADPH-dependent reduction of N-acetyl-5-glutamyl phosphate to yield N-acetyl-L-glutamate 5-semialdehyde. This chain is N-acetyl-gamma-glutamyl-phosphate reductase, found in Corynebacterium aurimucosum (strain ATCC 700975 / DSM 44827 / CIP 107346 / CN-1) (Corynebacterium nigricans).